A 249-amino-acid chain; its full sequence is Adapter protein MecA (249 aa).

This sequence belongs to the MecA family. Homodimer.

Its function is as follows. Enables the recognition and targeting of unfolded and aggregated proteins to the ClpC protease or to other proteins involved in proteolysis. The polypeptide is Adapter protein MecA (Streptococcus thermophilus (strain ATCC BAA-491 / LMD-9)).